The chain runs to 531 residues: Flavin-containing monooxygenase 3 (531 aa).

FAD is bound by residues 9–13 (GAGIS), glutamate 32, 40–41 (LW), and 61–62 (NS). Residues 60-61 (TN) and 195-198 (SGCD) each bind NADP(+). The chain crosses the membrane as a helical span at residues 511-531 (FSPWLKLLAIAVLLIAAVLVF).

This sequence belongs to the FMO family. Requires FAD as cofactor. Liver.

It is found in the microsome membrane. The protein resides in the endoplasmic reticulum membrane. The enzyme catalyses trimethylamine + NADPH + O2 = trimethylamine N-oxide + NADP(+) + H2O. It catalyses the reaction N,N-dimethylaniline + NADPH + O2 + H(+) = N,N-dimethylaniline N-oxide + NADP(+) + H2O. The catalysed reaction is hypotaurine + NADPH + O2 + H(+) = taurine + NADP(+) + H2O. It carries out the reaction (S)-nicotine + NADPH + O2 = trans-(S)-nicotine N(1')-oxide + NADP(+) + H2O. The enzyme catalyses albendazole + NADPH + O2 + H(+) = albendazole S-oxide + NADP(+) + H2O. Functionally, essential hepatic enzyme that catalyzes the oxygenation of a wide variety of nitrogen- and sulfur-containing compounds including drugs as well as dietary compounds. Plays an important role in the metabolism of trimethylamine (TMA), via the production of trimethylamine N-oxide (TMAO) metabolite. TMA is generated by the action of gut microbiota using dietary precursors such as choline, choline containing compounds, betaine or L-carnitine. By regulating TMAO concentration, FMO3 directly impacts both platelet responsiveness and rate of thrombus formation. This chain is Flavin-containing monooxygenase 3 (FMO3), found in Oryctolagus cuniculus (Rabbit).